The primary structure comprises 207 residues: Large ribosomal subunit protein uL4 (207 aa).

A disordered region spans residues 52-77 (RGWADVSGGGRKPWRQKGTGRARAGS).

It belongs to the universal ribosomal protein uL4 family. Part of the 50S ribosomal subunit.

One of the primary rRNA binding proteins, this protein initially binds near the 5'-end of the 23S rRNA. It is important during the early stages of 50S assembly. It makes multiple contacts with different domains of the 23S rRNA in the assembled 50S subunit and ribosome. Functionally, forms part of the polypeptide exit tunnel. This is Large ribosomal subunit protein uL4 from Moorella thermoacetica (strain ATCC 39073 / JCM 9320).